The sequence spans 104 residues: uncharacterized protein (104 aa).

This is an uncharacterized protein from Mycobacterium tuberculosis (strain ATCC 25618 / H37Rv).